Here is a 451-residue protein sequence, read N- to C-terminus: MSTAINSVEMSLSADEIRERVRAAGVVGAGGAGFPAHVKLQAQVEIFLVNAAECEPMLKVDQQLMWQQAARLVRGVQYAMTATGAREGVIALKEKYRRAIDALTPLLPDGIRLHILPDVYPAGDEVLTIWMATGRRVAPAALPASVGVVVNNVQTVLNIARAVEQRFPVTRRTLTVNGAVARPLTVTVPIGMSLREVLALAGGATVDDPGFINGGPMMGGLITSLDNPVTKTTGGLLVLPKSHPLIQRRMQDERTVLSVARTVCEQCRLCTDLCPRHLIGHELSPHLLVRAVNFHQAATPQLLLSALTCSECNVCESVACPVGISPMRINRMLKRELRAQNQRYEGPLNPADEMAKYRLVPVKRLIAKLGLSPWYQEAPLVEEEPSVEKVTLQLRQHIGASAVANVAVGERVTRGQCVADVPPGALGAPIHASIDGVVSAISEQAITVVRG.

4Fe-4S ferredoxin-type domains lie at 255 to 284 and 300 to 330; these read TVLSVARTVCEQCRLCTDLCPRHLIGHELS and PQLLLSALTCSECNVCESVACPVGISPMRIN. Residues Cys-264, Cys-267, Cys-270, Cys-274, Cys-309, Cys-312, Cys-315, and Cys-320 each coordinate [4Fe-4S] cluster.

This sequence belongs to the PduS cobalamin reductase family. As to quaternary structure, monomeric when purified anaerobically, dimeric under aerobic conditions. Forms a complex with PduO. Interacts with PduT, probably via the N-terminus of PduS. The cofactor is [4Fe-4S] cluster. Requires FMN as cofactor.

Its subcellular location is the bacterial microcompartment. It participates in polyol metabolism; 1,2-propanediol degradation. Its function is as follows. A protein that aids in conversion of cob(III)alamin to cob(II)alamin and then to cob(I)alamin in the bacterial microcompartment (BMC) dedicated to 1,2-propanediol (1,2-PD) degradation. The latter step requires PduO. No free cob(I)alamin is released, suggesting a complex is formed with PduO that finishes conversion to adenosylcobalamin. PduS and PduO allow regeneration of the adenosylcobalamin cofactor within the BMC. Another study showed reduction of cob(II)alamin to cob(I)alamin in the absence of PduO. Both reactions require NADH. Cyanocobalamin (CN-Cbl) is not a substrate for the first reaction. Cobalamin reduction probably occurs spontaneously in the presence of free reduced flavin nucleotides, this protein may be involved in electron transfer for this reduction. The 1,2-PD-specific bacterial microcompartment (BMC) concentrates low levels of 1,2-PD catabolic enzymes, concentrates volatile reaction intermediates thus enhancing pathway flux and keeps the level of toxic, mutagenic propionaldehyde low. The sequence is that of Cobalamin reductase PduS from Salmonella typhimurium (strain LT2 / SGSC1412 / ATCC 700720).